The chain runs to 399 residues: Acetylornithine aminotransferase (399 aa).

Pyridoxal 5'-phosphate contacts are provided by residues 97–98 and phenylalanine 130; that span reads GA. Residue arginine 133 coordinates N(2)-acetyl-L-ornithine. 215 to 218 contributes to the pyridoxal 5'-phosphate binding site; it reads DEVQ. Lysine 244 bears the N6-(pyridoxal phosphate)lysine mark. Threonine 272 provides a ligand contact to N(2)-acetyl-L-ornithine. Threonine 273 is a binding site for pyridoxal 5'-phosphate.

The protein belongs to the class-III pyridoxal-phosphate-dependent aminotransferase family. ArgD subfamily. In terms of assembly, homodimer. Pyridoxal 5'-phosphate is required as a cofactor.

The protein resides in the cytoplasm. The enzyme catalyses N(2)-acetyl-L-ornithine + 2-oxoglutarate = N-acetyl-L-glutamate 5-semialdehyde + L-glutamate. It functions in the pathway amino-acid biosynthesis; L-arginine biosynthesis; N(2)-acetyl-L-ornithine from L-glutamate: step 4/4. This Mesorhizobium japonicum (strain LMG 29417 / CECT 9101 / MAFF 303099) (Mesorhizobium loti (strain MAFF 303099)) protein is Acetylornithine aminotransferase.